The sequence spans 397 residues: Teichoic acid D-alanine hydrolase (397 aa).

The first 23 residues, 1–23 (MKFNKVKLVIHACVLLFIIISIA), serve as a signal peptide directing secretion.

The protein localises to the cell membrane. It carries out the reaction [(4-D-Ala)-(2-GlcNAc)-Rib-ol-P]n-[Gro-P]m-beta-D-ManNAc-(1-&gt;4)-alpha-D-GlcNAc-P-peptidoglycan + n H2O = [(2-GlcNAc)-Rib-ol-P]n-[Gro-P]m-beta-D-ManNAc-(1-&gt;4)-alpha-D-GlcNAc-P-peptidoglycan + n D-alanine.. Its function is as follows. Catalyzes the liberation of D-alanyl moieties present on wall teichoic acid (WTA) and lipoteichoic acid (LTA). Affects the methicillin resistance level and autolysis in the presence of Triton X-100 as well as the cell wall structure. The protein is Teichoic acid D-alanine hydrolase (fmtA) of Staphylococcus aureus (strain NCTC 8325 / PS 47).